Reading from the N-terminus, the 473-residue chain is ATP synthase subunit beta, chloroplastic (473 aa).

172 to 179 (GGAGVGKT) provides a ligand contact to ATP.

This sequence belongs to the ATPase alpha/beta chains family. F-type ATPases have 2 components, CF(1) - the catalytic core - and CF(0) - the membrane proton channel. CF(1) has five subunits: alpha(3), beta(3), gamma(1), delta(1), epsilon(1). CF(0) has four main subunits: a(1), b(1), b'(1) and c(9-12).

The protein localises to the plastid. Its subcellular location is the chloroplast thylakoid membrane. The catalysed reaction is ATP + H2O + 4 H(+)(in) = ADP + phosphate + 5 H(+)(out). Its function is as follows. Produces ATP from ADP in the presence of a proton gradient across the membrane. The catalytic sites are hosted primarily by the beta subunits. The polypeptide is ATP synthase subunit beta, chloroplastic (Equisetum arvense (Field horsetail)).